The sequence spans 121 residues: Small ribosomal subunit protein uS13 (121 aa).

The disordered stretch occupies residues 97–121 (VRGQRTRTNARTRRGARKTVAGKKK). Over residues 100–121 (QRTRTNARTRRGARKTVAGKKK) the composition is skewed to basic residues.

It belongs to the universal ribosomal protein uS13 family. In terms of assembly, part of the 30S ribosomal subunit. Forms a loose heterodimer with protein S19. Forms two bridges to the 50S subunit in the 70S ribosome.

Located at the top of the head of the 30S subunit, it contacts several helices of the 16S rRNA. In the 70S ribosome it contacts the 23S rRNA (bridge B1a) and protein L5 of the 50S subunit (bridge B1b), connecting the 2 subunits; these bridges are implicated in subunit movement. Contacts the tRNAs in the A and P-sites. The polypeptide is Small ribosomal subunit protein uS13 (Synechococcus sp. (strain CC9605)).